Here is a 222-residue protein sequence, read N- to C-terminus: Thiamine-phosphate synthase (222 aa).

4-amino-2-methyl-5-(diphosphooxymethyl)pyrimidine is bound by residues 40 to 44 (QLRDK) and Asn81. Residues Asp82 and Asp101 each contribute to the Mg(2+) site. Ser120 serves as a coordination point for 4-amino-2-methyl-5-(diphosphooxymethyl)pyrimidine. Position 146–148 (146–148 (TPT)) interacts with 2-[(2R,5Z)-2-carboxy-4-methylthiazol-5(2H)-ylidene]ethyl phosphate. Position 149 (Lys149) interacts with 4-amino-2-methyl-5-(diphosphooxymethyl)pyrimidine. A 2-[(2R,5Z)-2-carboxy-4-methylthiazol-5(2H)-ylidene]ethyl phosphate-binding site is contributed by Gly178.

The protein belongs to the thiamine-phosphate synthase family. The cofactor is Mg(2+).

It carries out the reaction 2-[(2R,5Z)-2-carboxy-4-methylthiazol-5(2H)-ylidene]ethyl phosphate + 4-amino-2-methyl-5-(diphosphooxymethyl)pyrimidine + 2 H(+) = thiamine phosphate + CO2 + diphosphate. It catalyses the reaction 2-(2-carboxy-4-methylthiazol-5-yl)ethyl phosphate + 4-amino-2-methyl-5-(diphosphooxymethyl)pyrimidine + 2 H(+) = thiamine phosphate + CO2 + diphosphate. The catalysed reaction is 4-methyl-5-(2-phosphooxyethyl)-thiazole + 4-amino-2-methyl-5-(diphosphooxymethyl)pyrimidine + H(+) = thiamine phosphate + diphosphate. The protein operates within cofactor biosynthesis; thiamine diphosphate biosynthesis; thiamine phosphate from 4-amino-2-methyl-5-diphosphomethylpyrimidine and 4-methyl-5-(2-phosphoethyl)-thiazole: step 1/1. In terms of biological role, condenses 4-methyl-5-(beta-hydroxyethyl)thiazole monophosphate (THZ-P) and 2-methyl-4-amino-5-hydroxymethyl pyrimidine pyrophosphate (HMP-PP) to form thiamine monophosphate (TMP). The protein is Thiamine-phosphate synthase of Mycobacterium tuberculosis (strain ATCC 25177 / H37Ra).